We begin with the raw amino-acid sequence, 704 residues long: MQDERPVDQLTEAEAAAELAHLAEAIAAADTAYHTHDAPRISDADYDALKRRNRAIEERFPALRRSDSPSERVGGALAEGFAKVRHEVRMLSLENAFELAEVEEWIERIRRFLGHVGDLRFTAEPKIDGLSLSLRYEKGRLVQAATRGDGETGENVTENARTIGDLPTELTGAPDLLEVRGEVYMRHADFAALNERQEATGQRLFANPRNAAAGSLRQLDPAVTASRPLHFFAYAWGAHSEPLADTQQGAIARLSALGFATNPLTRLCTGPDELLAHYADIERQRASLGYDIDGVVYKVDDLALQRRLGFRASTPRWAIAHKFAAELAWTQLEGIDIQVGRTGALSPVARLKPVTVGGVVVANATLHNEDYIAGRDSKGQEIRGGKDIRVGDWVQVYRAGDVIPKVAEVDLSRRPEGAEPYRFPDTCPDCGSAAIREPGDSVRRCTGGLICPAQQVERLKHFVSRAAFDIEGLGARQVEALWRDGWIRQPADIFELPNRYRDGLQRLENREGWGRKSAENLLAAIEARRRIALHRLIFALGIRHVGETTATLLATHYGSWAAFEAAMTRAEVGTGSEWQDLLSIDGVGAVLATSLVTTFHQEAERAAIDALAAHLTVEDAEMRAPVESPIAGKIVVFTGTLEKMSRNEAKARAEALGAKVSGSVSARTDLVVAGPGAGSKAKQAAALGVETIGEDAWLRLIGDA.

Residues 43-47 (DADYD), 92-93 (SL), and glutamate 124 contribute to the NAD(+) site. Catalysis depends on lysine 126, which acts as the N6-AMP-lysine intermediate. The NAD(+) site is built by arginine 147, glutamate 182, lysine 298, and lysine 322. 4 residues coordinate Zn(2+): cysteine 427, cysteine 430, cysteine 445, and cysteine 451. The region spanning 625-704 (PVESPIAGKI…DAWLRLIGDA (80 aa)) is the BRCT domain.

It belongs to the NAD-dependent DNA ligase family. LigA subfamily. Mg(2+) serves as cofactor. The cofactor is Mn(2+).

It carries out the reaction NAD(+) + (deoxyribonucleotide)n-3'-hydroxyl + 5'-phospho-(deoxyribonucleotide)m = (deoxyribonucleotide)n+m + AMP + beta-nicotinamide D-nucleotide.. Functionally, DNA ligase that catalyzes the formation of phosphodiester linkages between 5'-phosphoryl and 3'-hydroxyl groups in double-stranded DNA using NAD as a coenzyme and as the energy source for the reaction. It is essential for DNA replication and repair of damaged DNA. The protein is DNA ligase of Cereibacter sphaeroides (strain ATCC 17025 / ATH 2.4.3) (Rhodobacter sphaeroides).